Consider the following 117-residue polypeptide: Large ribosomal subunit protein bL20 (117 aa).

It belongs to the bacterial ribosomal protein bL20 family.

Its function is as follows. Binds directly to 23S ribosomal RNA and is necessary for the in vitro assembly process of the 50S ribosomal subunit. It is not involved in the protein synthesizing functions of that subunit. The sequence is that of Large ribosomal subunit protein bL20 from Rickettsia felis (strain ATCC VR-1525 / URRWXCal2) (Rickettsia azadi).